Reading from the N-terminus, the 126-residue chain is Phosphoribosyl-AMP cyclohydrolase (126 aa).

Position 73 (Asp-73) interacts with Mg(2+). A Zn(2+)-binding site is contributed by Cys-74. Positions 75 and 77 each coordinate Mg(2+). Positions 91 and 98 each coordinate Zn(2+).

It belongs to the PRA-CH family. In terms of assembly, homodimer. Requires Mg(2+) as cofactor. The cofactor is Zn(2+).

The protein localises to the cytoplasm. The enzyme catalyses 1-(5-phospho-beta-D-ribosyl)-5'-AMP + H2O = 1-(5-phospho-beta-D-ribosyl)-5-[(5-phospho-beta-D-ribosylamino)methylideneamino]imidazole-4-carboxamide. It participates in amino-acid biosynthesis; L-histidine biosynthesis; L-histidine from 5-phospho-alpha-D-ribose 1-diphosphate: step 3/9. Functionally, catalyzes the hydrolysis of the adenine ring of phosphoribosyl-AMP. In Solibacter usitatus (strain Ellin6076), this protein is Phosphoribosyl-AMP cyclohydrolase.